The chain runs to 498 residues: MASQGTKRSYEQMETGGERQNATEIRASVGRMVGGIGRFYIQMCTELKLSDQEGRLIQNSITIERMVLSAFDERRNRYLEEHPSAGKDPKKTGGPIYRRRDGKWVRELILYDKEEIRRIWRQANNGEDATAGLTHMMIWHSNLNDATYQRTRALVRTGMDPRMCSLMQGSTLPRRSGAAGAAIKGVGTMVMELIRMIKRGINDRNFWRGENGRRTRIAYERMCNILKGKFQTAAQKAMMDQVRESRNPGNAEIEDLIFLARSALILRGSVAHKSCLPACVYGPAVASGYDFEREGYSLVGIDPFRLLQNSQVFSLIRPKENPAHKSQLVWMACHSAAFEDLRVSSFIRGTRVIPRGQLSTRGVQIASNENVEAMDSTTLELRSRYWAIRTRSGGNTNQQRASAGQISVQPTFSVQRNLPFERVTIMAAFKGNTEGRTSDMRTEIIRMMESARPEDVSFQGRGVFELSDEKATNPIVPSFDMSNEGSYFFGDNAEEYDN.

Residues 1–18 (MASQGTKRSYEQMETGGE) carry the Unconventional nuclear localization signal motif. Residues 1–21 (MASQGTKRSYEQMETGGERQN) are disordered. Positions 198–216 (KRGINDRNFWRGENGRRTR) match the Bipartite nuclear localization signal motif.

The protein belongs to the influenza viruses nucleoprotein family. In terms of assembly, homomultimerizes to form the nucleocapsid. May bind host exportin-1/XPO1. Binds to viral genomic RNA. Protein-RNA contacts are mediated by a combination of electrostatic interactions between positively charged residues and the phosphate backbone and planar interactions between aromatic side chains and bases. In terms of processing, late in virus-infected cells, may be cleaved from a 56-kDa protein to a 53-kDa protein by a cellular caspase. This cleavage might be a marker for the onset of apoptosis in infected cells or have a specific function in virus host interaction.

It is found in the virion. The protein resides in the host nucleus. Functionally, encapsidates the negative strand viral RNA, protecting it from nucleases. The encapsidated genomic RNA is termed the ribonucleoprotein (RNP) and serves as template for transcription and replication. The RNP needs to be localized in the host nucleus to start an infectious cycle, but is too large to diffuse through the nuclear pore complex. NP comprises at least 2 nuclear localization signals that are responsible for the active RNP import into the nucleus through cellular importin alpha/beta pathway. Later in the infection, nclear export of RNPs are mediated through viral proteins NEP interacting with M1 which binds nucleoproteins. It is possible that nucleoprotein binds directly host exportin-1/XPO1 and plays an active role in RNPs nuclear export. M1 interaction with RNP seems to hide nucleoprotein's nuclear localization signals. Soon after a virion infects a new cell, M1 dissociates from the RNP under acidification of the virion driven by M2 protein. Dissociation of M1 from RNP unmasks nucleoprotein's nuclear localization signals, targeting the RNP to the nucleus. The chain is Nucleoprotein from Influenza A virus (strain A/Hong Kong/156/1997 H5N1 genotype Gs/Gd).